Here is a 283-residue protein sequence, read N- to C-terminus: MSAHIIDGNLLSQQLRQDVATRAAALSAKGKQPGLAVILVGADPASQVYVRNKVKACEDNGLFSLLEKYEADMTEAALLARIAALNNDPAIHGILVQMPLPKHIDPTKVIEAISPRKDVDGYSVLSAGELLTGLPGFRPCTPYGCMKLIESTGTKIAGKHAVVIGRSNTVGKPMALLLLQANATVTICHSGTADLGYHTRQADIVVAATGRRNTLTADMIKPGAIVIDVGINRDDNGKLCGDVDFAAAKEVAGHISPVPGGVGPMTITMLLVNTIEAAERETN.

Residues 165–167 (GRS), serine 190, and isoleucine 231 each bind NADP(+).

This sequence belongs to the tetrahydrofolate dehydrogenase/cyclohydrolase family. In terms of assembly, homodimer.

It carries out the reaction (6R)-5,10-methylene-5,6,7,8-tetrahydrofolate + NADP(+) = (6R)-5,10-methenyltetrahydrofolate + NADPH. The catalysed reaction is (6R)-5,10-methenyltetrahydrofolate + H2O = (6R)-10-formyltetrahydrofolate + H(+). The protein operates within one-carbon metabolism; tetrahydrofolate interconversion. Its function is as follows. Catalyzes the oxidation of 5,10-methylenetetrahydrofolate to 5,10-methenyltetrahydrofolate and then the hydrolysis of 5,10-methenyltetrahydrofolate to 10-formyltetrahydrofolate. The protein is Bifunctional protein FolD of Herminiimonas arsenicoxydans.